The primary structure comprises 104 residues: Small ribosomal subunit protein uS10 (104 aa).

The protein belongs to the universal ribosomal protein uS10 family. In terms of assembly, part of the 30S ribosomal subunit.

Its function is as follows. Involved in the binding of tRNA to the ribosomes. The chain is Small ribosomal subunit protein uS10 from Alkaliphilus metalliredigens (strain QYMF).